The chain runs to 100 residues: Large ribosomal subunit protein uL23 (100 aa).

It belongs to the universal ribosomal protein uL23 family. Part of the 50S ribosomal subunit. Contacts protein L29, and trigger factor when it is bound to the ribosome.

In terms of biological role, one of the early assembly proteins it binds 23S rRNA. One of the proteins that surrounds the polypeptide exit tunnel on the outside of the ribosome. Forms the main docking site for trigger factor binding to the ribosome. This chain is Large ribosomal subunit protein uL23, found in Synechococcus sp. (strain CC9902).